The primary structure comprises 417 residues: Exodeoxyribonuclease 7 large subunit (417 aa).

Belongs to the XseA family. In terms of assembly, heterooligomer composed of large and small subunits.

It is found in the cytoplasm. It catalyses the reaction Exonucleolytic cleavage in either 5'- to 3'- or 3'- to 5'-direction to yield nucleoside 5'-phosphates.. Bidirectionally degrades single-stranded DNA into large acid-insoluble oligonucleotides, which are then degraded further into small acid-soluble oligonucleotides. The chain is Exodeoxyribonuclease 7 large subunit from Helicobacter hepaticus (strain ATCC 51449 / 3B1).